A 20-amino-acid polypeptide reads, in one-letter code: Juvenile hormone-binding protein (20 aa).

The protein localises to the secreted. Functionally, prevents juvenile hormone from being hydrolyzed by general esterases by combining with it specifically. This is Juvenile hormone-binding protein (JHBP) from Bombyx mori (Silk moth).